The primary structure comprises 324 residues: Ribosomal lysine N-methyltransferase 5 (324 aa).

S-adenosyl-L-methionine is bound by residues Trp90, 140–142 (GSG), Asp162, Trp217, and Met247.

This sequence belongs to the class I-like SAM-binding methyltransferase superfamily. RKM5 family.

Functionally, S-adenosyl-L-methionine-dependent protein-lysine N-methyltransferase that methylates 60S ribosomal protein L1. The chain is Ribosomal lysine N-methyltransferase 5 (RKM5) from Vanderwaltozyma polyspora (strain ATCC 22028 / DSM 70294 / BCRC 21397 / CBS 2163 / NBRC 10782 / NRRL Y-8283 / UCD 57-17) (Kluyveromyces polysporus).